Reading from the N-terminus, the 250-residue chain is Small ribosomal subunit protein uS2 (250 aa).

Positions D226–A250 are disordered. Over residues A239 to A250 the composition is skewed to low complexity.

Belongs to the universal ribosomal protein uS2 family.

The protein is Small ribosomal subunit protein uS2 (rpsB) of Zymomonas mobilis subsp. mobilis (strain ATCC 31821 / ZM4 / CP4).